A 121-amino-acid chain; its full sequence is Large ribosomal subunit protein bL12 (121 aa).

It belongs to the bacterial ribosomal protein bL12 family. In terms of assembly, homodimer. Part of the ribosomal stalk of the 50S ribosomal subunit. Forms a multimeric L10(L12)X complex, where L10 forms an elongated spine to which 2 to 4 L12 dimers bind in a sequential fashion. Binds GTP-bound translation factors.

In terms of biological role, forms part of the ribosomal stalk which helps the ribosome interact with GTP-bound translation factors. Is thus essential for accurate translation. The protein is Large ribosomal subunit protein bL12 of Mesomycoplasma hyopneumoniae (strain 7448) (Mycoplasma hyopneumoniae).